Reading from the N-terminus, the 582-residue chain is SUMO-activating enzyme subunit uba-2 (582 aa).

Residues 20 to 25 (GAGGIG), D44, 52 to 55 (NLNR), K68, 91 to 92 (SI), and 113 to 118 (DNRAAR) contribute to the ATP site. C154 and C157 together coordinate Zn(2+). Catalysis depends on C170, which acts as the Glycyl thioester intermediate. The span at 204–214 (SPDMDAVDPDN) shows a compositional bias: acidic residues. The interval 204-235 (SPDMDAVDPDNTEAVTTEKEKEAMKEEPAPVG) is disordered. A compositionally biased stretch (basic and acidic residues) spans 219–231 (TTEKEKEAMKEEP). Zn(2+)-binding residues include C431 and C434. Residues 531–570 (FEVARSEKEPEPDDRKRKADGSEEPEAKRQKVEEKDDKNG) are compositionally biased toward basic and acidic residues. Residues 531–582 (FEVARSEKEPEPDDRKRKADGSEEPEAKRQKVEEKDDKNGNEAVAEITETMA) form a disordered region.

This sequence belongs to the ubiquitin-activating E1 family. As to quaternary structure, heterodimer with aos-1.

It functions in the pathway protein modification; protein sumoylation. Its function is as follows. The dimeric enzyme acts as an E1 ligase for smo-1. It mediates ATP-dependent activation of smo-1 and formation of a thioester with a conserved cysteine residue on uba-2. This chain is SUMO-activating enzyme subunit uba-2 (uba-2), found in Caenorhabditis elegans.